Here is a 377-residue protein sequence, read N- to C-terminus: Mucin-7 (377 aa).

The first 22 residues, 1–22 (MKTLPLFVCICALSACFSFSEG), serve as a signal peptide directing secretion. Residues 70–100 (CRPKLPPSPNNPPKFPNPHQPPKHPDKNSSV) form a disordered region. Residues 73–89 (KLPPSPNNPPKFPNPHQ) are compositionally biased toward pro residues. Residues asparagine 97, asparagine 128, asparagine 135, and asparagine 146 are each glycosylated (N-linked (GlcNAc...) asparagine). A disordered region spans residues 150-355 (SVATLAPVNS…QPTSAPGQNK (206 aa)). Repeat copies occupy residues 165-187 (TTAAPPTPSATTPAPPSSSAPPE), 188-210 (TTAAPPTPSATTQAPPSSSAPPE), 211-233 (TTAAPPTPPATTPAPPSSSAPPE), 234-256 (TTAAPPTPSATTPAPLSSSAPPE), 257-279 (TTAVPPTPSATTLDPSSASAPPE), and 280-302 (TTAAPPTPSATTPAPPSSPAPQE). Over residues 169–183 (PPTPSATTPAPPSSS) the composition is skewed to pro residues. O-linked (GalNAc) threonine; by GALNT13 glycosylation occurs at threonine 176. O-linked (GalNAc) serine; by GALNT13 glycans are attached at residues serine 182 and serine 183. The segment covering 184-214 (APPETTAAPPTPSATTQAPPSSSAPPETTAA) has biased composition (low complexity). Residues threonine 188 and threonine 189 are each glycosylated (O-linked (GalNAc) threonine; by GALNT13). The span at 215 to 229 (PPTPPATTPAPPSSS) shows a compositional bias: pro residues. A compositionally biased stretch (low complexity) spans 230 to 283 (APPETTAAPPTPSATTPAPLSSSAPPETTAVPPTPSATTLDPSSASAPPETTAA). Residues 284 to 298 (PPTPSATTPAPPSSP) show a composition bias toward pro residues. Residues 309 to 329 (TTPNSSPTTLAPDTSETSAAP) show a composition bias toward polar residues. Positions 330–348 (THQTTTSVTTQTTTTKQPT) are enriched in low complexity.

In terms of assembly, monomer. In terms of processing, N- and O-glycosylated. Contains fucose, mannose, galactose, N-acetylglucosamine and N-acetylgalactosamine. Expressed in salivary gland tissues and only in those that contain mucous acinar cells (e.g. sublingual and submandibular glands) and not in salivary glands containing only serous acinar cells (e.g. parotid gland).

Its subcellular location is the secreted. In terms of biological role, may function in a protective capacity by promoting the clearance of bacteria in the oral cavity and aiding in mastication, speech, and swallowing. Binds P.aeruginosa pili. This is Mucin-7 (MUC7) from Homo sapiens (Human).